A 417-amino-acid polypeptide reads, in one-letter code: Guanine nucleotide-exchange factor SEC12 (417 aa).

Over 1-388 (MGRRRGVELY…QLHLLPSRRS (388 aa)) the chain is Cytoplasmic. 3'-nitrotyrosine is present on Tyr10. Positions 101–135 (KGSKAEKSGSKEQGPRQRKGAAPAEKKSGAEVHPE) are disordered. 2 stretches are compositionally biased toward basic and acidic residues: residues 103–115 (SKAE…EQGP) and 124–135 (AEKKSGAEVHPE). WD repeat units lie at residues 152–191 (STEP…KVLE), 194–232 (AHEG…TQLQ), and 298–337 (CGHE…RLYY). Residues 389–409 (VPVWLLLLLCVGLIIVTILLL) form a helical membrane-spanning segment. The Lumenal segment spans residues 410-417 (QSAFPGFL).

In terms of assembly, interacts with SAR1B (GDP-bound form). Interacts with MIA2; recruits PREB to endoplasmic reticulum exit sites. Interacts with CIDEB; facilitating loading of SCAP-SREBP into COPII vesicles.

It localises to the endoplasmic reticulum membrane. The protein resides in the nucleus. Guanine nucleotide exchange factor (GEF) that regulates the assembly of the coat protein complex II/COPII in endoplasmic reticulum (ER) to Golgi vesicle-mediated transport. Selectively activates SAR1A and SAR1B by promoting the exchange of guanosine diphosphate (GDP) for guanosine triphosphate (GTP) in these small GTPases. In their activated GTP-bound state, SAR1A and SAR1B insert into the membrane of the endoplasmic reticulum where they recruit the remainder of the coat protein complex II/COPII which is responsible for both the sorting of proteins and the deformation and budding of membranes into vesicles destined to the Golgi. In terms of biological role, was first identified based on its probable role in the regulation of pituitary gene transcription. Binds to the prolactin gene (PRL) promoter and seems to activate transcription. The sequence is that of Guanine nucleotide-exchange factor SEC12 from Rattus norvegicus (Rat).